Here is a 102-residue protein sequence, read N- to C-terminus: Large ribosomal subunit protein uL23c (102 aa).

This sequence belongs to the universal ribosomal protein uL23 family. Part of the 50S ribosomal subunit.

It localises to the plastid. The protein localises to the chloroplast. Binds to 23S rRNA. The protein is Large ribosomal subunit protein uL23c (rpl23) of Trieres chinensis (Marine centric diatom).